A 90-amino-acid polypeptide reads, in one-letter code: C-C motif chemokine 4 homolog (90 aa).

Positions 1-21 (MKVSVAALAVLLIAICYQTSA) are cleaved as a signal peptide. Cystine bridges form between Cys-32/Cys-56 and Cys-33/Cys-72.

This sequence belongs to the intercrine beta (chemokine CC) family. Homodimer.

It is found in the secreted. In terms of biological role, monokine with inflammatory and chemokinetic properties. In Gallus gallus (Chicken), this protein is C-C motif chemokine 4 homolog (CCL4).